A 201-amino-acid polypeptide reads, in one-letter code: Small ribosomal subunit protein uS4c (201 aa).

The 61-residue stretch at 89 to 149 folds into the S4 RNA-binding domain; that stretch reads MRLDNILFRL…DKPKSGALIK (61 aa).

It belongs to the universal ribosomal protein uS4 family. In terms of assembly, part of the 30S ribosomal subunit. Contacts protein S5. The interaction surface between S4 and S5 is involved in control of translational fidelity.

The protein resides in the plastid. Functionally, one of the primary rRNA binding proteins, it binds directly to 16S rRNA where it nucleates assembly of the body of the 30S subunit. In terms of biological role, with S5 and S12 plays an important role in translational accuracy. This Cuscuta exaltata (Tall dodder) protein is Small ribosomal subunit protein uS4c (rps4).